The following is a 203-amino-acid chain: Acireductone dioxygenase 3 (203 aa).

Residues histidine 96, histidine 98, glutamate 102, and histidine 141 each contribute to the Fe(2+) site. Ni(2+)-binding residues include histidine 96, histidine 98, glutamate 102, and histidine 141.

This sequence belongs to the acireductone dioxygenase (ARD) family. The cofactor is Fe(2+). Requires Ni(2+) as cofactor.

It localises to the cytoplasm. The protein resides in the nucleus. The enzyme catalyses 1,2-dihydroxy-5-(methylsulfanyl)pent-1-en-3-one + O2 = 4-methylsulfanyl-2-oxobutanoate + formate + 2 H(+). It catalyses the reaction 1,2-dihydroxy-5-(methylsulfanyl)pent-1-en-3-one + O2 = 3-(methylsulfanyl)propanoate + CO + formate + 2 H(+). It functions in the pathway amino-acid biosynthesis; L-methionine biosynthesis via salvage pathway; L-methionine from S-methyl-5-thio-alpha-D-ribose 1-phosphate: step 5/6. Functionally, catalyzes 2 different reactions between oxygen and the acireductone 1,2-dihydroxy-3-keto-5-methylthiopentene (DHK-MTPene) depending upon the metal bound in the active site. Fe-containing acireductone dioxygenase (Fe-ARD) produces formate and 2-keto-4-methylthiobutyrate (KMTB), the alpha-ketoacid precursor of methionine in the methionine recycle pathway. Ni-containing acireductone dioxygenase (Ni-ARD) produces methylthiopropionate, carbon monoxide and formate, and does not lie on the methionine recycle pathway. In Physcomitrium patens (Spreading-leaved earth moss), this protein is Acireductone dioxygenase 3.